The sequence spans 336 residues: GTP 3',8-cyclase (336 aa).

The Radical SAM core domain occupies 16-241 (AYRRTYYYLR…QSKGITDGPA (226 aa)). A GTP-binding site is contributed by arginine 25. 2 residues coordinate [4Fe-4S] cluster: cysteine 32 and cysteine 36. S-adenosyl-L-methionine is bound at residue tyrosine 38. Cysteine 39 contacts [4Fe-4S] cluster. Arginine 75 contacts GTP. Glycine 79 is an S-adenosyl-L-methionine binding site. Threonine 106 contributes to the GTP binding site. Serine 130 contacts S-adenosyl-L-methionine. Lysine 167 contributes to the GTP binding site. Methionine 201 provides a ligand contact to S-adenosyl-L-methionine. Positions 264 and 267 each coordinate [4Fe-4S] cluster. 269–271 (RLR) contributes to the GTP binding site. Residue cysteine 281 participates in [4Fe-4S] cluster binding.

The protein belongs to the radical SAM superfamily. MoaA family. As to quaternary structure, monomer and homodimer. It depends on [4Fe-4S] cluster as a cofactor.

The catalysed reaction is GTP + AH2 + S-adenosyl-L-methionine = (8S)-3',8-cyclo-7,8-dihydroguanosine 5'-triphosphate + 5'-deoxyadenosine + L-methionine + A + H(+). The protein operates within cofactor biosynthesis; molybdopterin biosynthesis. Its function is as follows. Catalyzes the cyclization of GTP to (8S)-3',8-cyclo-7,8-dihydroguanosine 5'-triphosphate. This chain is GTP 3',8-cyclase, found in Actinobacillus succinogenes (strain ATCC 55618 / DSM 22257 / CCUG 43843 / 130Z).